Here is a 200-residue protein sequence, read N- to C-terminus: Riboflavin synthase (200 aa).

Lumazine-binding repeat units lie at residues 1–97 and 98–190; these read MFSG…IGGH and LLSG…VDTV. 2,4-dihydroxypteridine contacts are provided by residues 4-6, 48-50, 62-67, 101-103, lysine 132, 141-143, and 155-160; these read GII, CLT, DVIPET, GHV, SLT, and GLIPET.

In terms of assembly, homotrimer.

The enzyme catalyses 2 6,7-dimethyl-8-(1-D-ribityl)lumazine + H(+) = 5-amino-6-(D-ribitylamino)uracil + riboflavin. Its pathway is cofactor biosynthesis; riboflavin biosynthesis; riboflavin from 2-hydroxy-3-oxobutyl phosphate and 5-amino-6-(D-ribitylamino)uracil: step 2/2. Catalyzes the dismutation of two molecules of 6,7-dimethyl-8-ribityllumazine, resulting in the formation of riboflavin and 5-amino-6-(D-ribitylamino)uracil. This Chlamydia pneumoniae (Chlamydophila pneumoniae) protein is Riboflavin synthase (ribE).